Reading from the N-terminus, the 777-residue chain is CRISPR system single-strand-specific deoxyribonuclease Cas10/Csm1 (subtype III-A) (777 aa).

Residues 1–106 form the HD domain; sequence MEIDELTALG…VYEADNLASG (106 aa). The region spanning 513–660 is the GGDEF domain; that stretch reads RRLGVMKGDV…GRNRVFVVGR (148 aa).

It belongs to the CRISPR-associated Cas10/Csm1 family. Probably part of the Csm effector complex, that includes Cas10, Csm2, Csm3, Csm4, Csm5 and mature crRNA. Will form a homodimer in solution, interacts with Csm4, which is a tighter, better association than the homodimeric Cas10 and uses the same interface for interaction. A divalent metal cation serves as cofactor.

SsDNase activity is inhibited by EDTA. Functionally, CRISPR (clustered regularly interspaced short palindromic repeat) is an adaptive immune system that provides protection against mobile genetic elements (viruses, transposable elements and conjugative plasmids). CRISPR clusters contain spacers, sequences complementary to antecedent mobile elements, and target invading nucleic acids. CRISPR clusters are transcribed and processed into CRISPR RNA (crRNA). The type III-A Csm effector complex binds crRNA and acts as a crRNA-guided RNase, DNase and cyclic oligoadenylate synthase; binding of target RNA cognate to the crRNA is required for all activities. A single-strand deoxyribonuclease (ssDNase) which digests linear and circular ssDNA; has 5'-3' and 3'-5' exonuclease activity as well as a less efficient endonuclease activity. Has a minimal size requirement; 100 nucleotide ssDNA (nt) is more efficiently digested than 50 or 25 nt ssDNA, while 14 nt ssDNA is not cleaved at all. It has no activity on dsDNA or ssRNA. Its function is as follows. ssDNase activity is stimulated in the ternary Csm effector complex; binding of cognate target RNA activates the ssDNase, as the target RNA is degraded ssDNA activity decreases. In terms of biological role, when associated with the ternary Csm effector complex (the crRNA, Cas proteins and a cognate target ssRNA) synthesizes cyclic oligoadenylates (cOA) from ATP. cOAs are second messengers that stimulate the ssRNase activity of Csm6, inducing an antiviral state important for defense against invading nucleic acids. The protein is CRISPR system single-strand-specific deoxyribonuclease Cas10/Csm1 (subtype III-A) of Thermococcus onnurineus (strain NA1).